We begin with the raw amino-acid sequence, 356 residues long: Protein RecA (356 aa).

69 to 76 contributes to the ATP binding site; it reads GPESSGKT.

Belongs to the RecA family.

The protein resides in the cytoplasm. Functionally, can catalyze the hydrolysis of ATP in the presence of single-stranded DNA, the ATP-dependent uptake of single-stranded DNA by duplex DNA, and the ATP-dependent hybridization of homologous single-stranded DNAs. It interacts with LexA causing its activation and leading to its autocatalytic cleavage. The chain is Protein RecA from Gloeothece citriformis (strain PCC 7424) (Cyanothece sp. (strain PCC 7424)).